A 1171-amino-acid polypeptide reads, in one-letter code: DNA-directed RNA polymerase subunit beta (1171 aa).

This sequence belongs to the RNA polymerase beta chain family. As to quaternary structure, the RNAP catalytic core consists of 2 alpha, 1 beta, 1 beta' and 1 omega subunit. When a sigma factor is associated with the core the holoenzyme is formed, which can initiate transcription.

The catalysed reaction is RNA(n) + a ribonucleoside 5'-triphosphate = RNA(n+1) + diphosphate. Its function is as follows. DNA-dependent RNA polymerase catalyzes the transcription of DNA into RNA using the four ribonucleoside triphosphates as substrates. This chain is DNA-directed RNA polymerase subunit beta, found in Corynebacterium efficiens (strain DSM 44549 / YS-314 / AJ 12310 / JCM 11189 / NBRC 100395).